Reading from the N-terminus, the 287-residue chain is Eukaryotic translation initiation factor 3 subunit F (287 aa).

Positions 12–142 (VRVHPVVLFQ…IKAYVCVSLG (131 aa)) constitute an MPN domain.

Belongs to the eIF-3 subunit F family. Component of the eukaryotic translation initiation factor 3 (eIF-3) complex.

It is found in the cytoplasm. Its function is as follows. Component of the eukaryotic translation initiation factor 3 (eIF-3) complex, which is involved in protein synthesis of a specialized repertoire of mRNAs and, together with other initiation factors, stimulates binding of mRNA and methionyl-tRNAi to the 40S ribosome. The eIF-3 complex specifically targets and initiates translation of a subset of mRNAs involved in cell proliferation. The protein is Eukaryotic translation initiation factor 3 subunit F of Aedes aegypti (Yellowfever mosquito).